A 258-amino-acid polypeptide reads, in one-letter code: Deoxyribose-phosphate aldolase 2 (258 aa).

Residue aspartate 102 is the Proton donor/acceptor of the active site. The active-site Schiff-base intermediate with acetaldehyde is lysine 165. Lysine 199 (proton donor/acceptor) is an active-site residue.

This sequence belongs to the DeoC/FbaB aldolase family. DeoC type 2 subfamily.

It localises to the cytoplasm. It catalyses the reaction 2-deoxy-D-ribose 5-phosphate = D-glyceraldehyde 3-phosphate + acetaldehyde. The protein operates within carbohydrate degradation; 2-deoxy-D-ribose 1-phosphate degradation; D-glyceraldehyde 3-phosphate and acetaldehyde from 2-deoxy-alpha-D-ribose 1-phosphate: step 2/2. Functionally, catalyzes a reversible aldol reaction between acetaldehyde and D-glyceraldehyde 3-phosphate to generate 2-deoxy-D-ribose 5-phosphate. In Vibrio vulnificus (strain YJ016), this protein is Deoxyribose-phosphate aldolase 2 (deoC2).